The sequence spans 161 residues: Transcriptional regulator MraZ (161 aa).

2 consecutive SpoVT-AbrB domains span residues 7-55 (RYTN…GPAF) and 84-127 (SAEL…EPGA).

The protein belongs to the MraZ family. In terms of assembly, forms oligomers.

The protein resides in the cytoplasm. It localises to the nucleoid. In Parvibaculum lavamentivorans (strain DS-1 / DSM 13023 / NCIMB 13966), this protein is Transcriptional regulator MraZ.